A 155-amino-acid polypeptide reads, in one-letter code: Interferon gamma (155 aa).

The N-terminal stretch at 1 to 22 (MNATHCILALQLFLMAVSGCYC) is a signal peptide. Residues asparagine 38 and asparagine 90 are each glycosylated (N-linked (GlcNAc...) asparagine).

Belongs to the type II (or gamma) interferon family. In terms of assembly, homodimer. Interacts with IFNGR1 (via extracellular domain); this interaction promotes IFNGR1 dimerization. Released primarily from activated T lymphocytes.

Its subcellular location is the secreted. Functionally, type II interferon produced by immune cells such as T-cells and NK cells that plays crucial roles in antimicrobial, antiviral, and antitumor responses by activating effector immune cells and enhancing antigen presentation. Primarily signals through the JAK-STAT pathway after interaction with its receptor IFNGR1 to affect gene regulation. Upon IFNG binding, IFNGR1 intracellular domain opens out to allow association of downstream signaling components JAK2, JAK1 and STAT1, leading to STAT1 activation, nuclear translocation and transcription of IFNG-regulated genes. Many of the induced genes are transcription factors such as IRF1 that are able to further drive regulation of a next wave of transcription. Plays a role in class I antigen presentation pathway by inducing a replacement of catalytic proteasome subunits with immunoproteasome subunits. In turn, increases the quantity, quality, and repertoire of peptides for class I MHC loading. Increases the efficiency of peptide generation also by inducing the expression of activator PA28 that associates with the proteasome and alters its proteolytic cleavage preference. Up-regulates as well MHC II complexes on the cell surface by promoting expression of several key molecules such as cathepsins B/CTSB, H/CTSH, and L/CTSL. Participates in the regulation of hematopoietic stem cells during development and under homeostatic conditions by affecting their development, quiescence, and differentiation. The polypeptide is Interferon gamma (Ifng) (Mus musculus (Mouse)).